We begin with the raw amino-acid sequence, 291 residues long: Urease accessory protein UreD (291 aa).

The protein belongs to the UreD family. As to quaternary structure, ureD, UreF and UreG form a complex that acts as a GTP-hydrolysis-dependent molecular chaperone, activating the urease apoprotein by helping to assemble the nickel containing metallocenter of UreC. The UreE protein probably delivers the nickel.

It is found in the cytoplasm. In terms of biological role, required for maturation of urease via the functional incorporation of the urease nickel metallocenter. This chain is Urease accessory protein UreD, found in Acinetobacter baumannii (strain ATCC 17978 / DSM 105126 / CIP 53.77 / LMG 1025 / NCDC KC755 / 5377).